The sequence spans 273 residues: DNA repair protein RecO (273 aa).

This sequence belongs to the RecO family.

Functionally, involved in DNA repair and RecF pathway recombination. The protein is DNA repair protein RecO of Saccharopolyspora erythraea (strain ATCC 11635 / DSM 40517 / JCM 4748 / NBRC 13426 / NCIMB 8594 / NRRL 2338).